Consider the following 274-residue polypeptide: Putative pyruvate, phosphate dikinase regulatory protein (274 aa).

Residue 151-158 (GVSRTSKT) participates in ADP binding.

The protein belongs to the pyruvate, phosphate/water dikinase regulatory protein family. PDRP subfamily.

The catalysed reaction is N(tele)-phospho-L-histidyl/L-threonyl-[pyruvate, phosphate dikinase] + ADP = N(tele)-phospho-L-histidyl/O-phospho-L-threonyl-[pyruvate, phosphate dikinase] + AMP + H(+). It catalyses the reaction N(tele)-phospho-L-histidyl/O-phospho-L-threonyl-[pyruvate, phosphate dikinase] + phosphate + H(+) = N(tele)-phospho-L-histidyl/L-threonyl-[pyruvate, phosphate dikinase] + diphosphate. Bifunctional serine/threonine kinase and phosphorylase involved in the regulation of the pyruvate, phosphate dikinase (PPDK) by catalyzing its phosphorylation/dephosphorylation. The polypeptide is Putative pyruvate, phosphate dikinase regulatory protein (Pelagibacter ubique (strain HTCC1062)).